Reading from the N-terminus, the 173-residue chain is MAIILGIDPGSRITGYGVIRQVGRQLTYLGSGCIRTKVDDLPSRLKLIYAGVTEIITQFQPDYFAIEQVFMAKNADSALKLGQARGVAIVAAVNRELPVFEYAARQVKQTVVGIGSAEKSQVQHMVRTLLKLPANPQADAADALAIAITHCHVSQNAMQMSESRLNLARGRLR.

Catalysis depends on residues Asp8, Glu67, and Asp139. Residues Asp8, Glu67, and Asp139 each contribute to the Mg(2+) site.

It belongs to the RuvC family. Homodimer which binds Holliday junction (HJ) DNA. The HJ becomes 2-fold symmetrical on binding to RuvC with unstacked arms; it has a different conformation from HJ DNA in complex with RuvA. In the full resolvosome a probable DNA-RuvA(4)-RuvB(12)-RuvC(2) complex forms which resolves the HJ. It depends on Mg(2+) as a cofactor.

It localises to the cytoplasm. The enzyme catalyses Endonucleolytic cleavage at a junction such as a reciprocal single-stranded crossover between two homologous DNA duplexes (Holliday junction).. Its function is as follows. The RuvA-RuvB-RuvC complex processes Holliday junction (HJ) DNA during genetic recombination and DNA repair. Endonuclease that resolves HJ intermediates. Cleaves cruciform DNA by making single-stranded nicks across the HJ at symmetrical positions within the homologous arms, yielding a 5'-phosphate and a 3'-hydroxyl group; requires a central core of homology in the junction. The consensus cleavage sequence is 5'-(A/T)TT(C/G)-3'. Cleavage occurs on the 3'-side of the TT dinucleotide at the point of strand exchange. HJ branch migration catalyzed by RuvA-RuvB allows RuvC to scan DNA until it finds its consensus sequence, where it cleaves and resolves the cruciform DNA. The sequence is that of Crossover junction endodeoxyribonuclease RuvC from Salmonella arizonae (strain ATCC BAA-731 / CDC346-86 / RSK2980).